Here is a 329-residue protein sequence, read N- to C-terminus: DNA-directed RNA polymerase subunit alpha (329 aa).

The segment at 1–235 (MQGSVTEFLK…EQLEAFVDLR (235 aa)) is alpha N-terminal domain (alpha-NTD). Residues 249-329 (FDPILLRPVD…NWPPASIADE (81 aa)) form an alpha C-terminal domain (alpha-CTD) region.

It belongs to the RNA polymerase alpha chain family. In terms of assembly, homodimer. The RNAP catalytic core consists of 2 alpha, 1 beta, 1 beta' and 1 omega subunit. When a sigma factor is associated with the core the holoenzyme is formed, which can initiate transcription.

It catalyses the reaction RNA(n) + a ribonucleoside 5'-triphosphate = RNA(n+1) + diphosphate. DNA-dependent RNA polymerase catalyzes the transcription of DNA into RNA using the four ribonucleoside triphosphates as substrates. This is DNA-directed RNA polymerase subunit alpha from Shigella flexneri serotype 5b (strain 8401).